The sequence spans 66 residues: Cold shock protein 2 (66 aa).

Positions 4–63 (GTVKWFNADKGFGFITGEDGTDVFVHFSAIQTDGFKTLDEGQKVTYDEEQGDRGPQATNV) constitute a CSD domain.

It is found in the cytoplasm. The protein is Cold shock protein 2 (cspL) of Lactiplantibacillus plantarum (strain ATCC BAA-793 / NCIMB 8826 / WCFS1) (Lactobacillus plantarum).